We begin with the raw amino-acid sequence, 116 residues long: UPF0102 protein PERMA_0362 (116 aa).

It belongs to the UPF0102 family.

This chain is UPF0102 protein PERMA_0362, found in Persephonella marina (strain DSM 14350 / EX-H1).